The chain runs to 698 residues: Capon-like protein (698 aa).

A PID domain is found at 25–194 (FFHGITFQAK…SELLDVEQIS (170 aa)). Positions 191–240 (EQISEQQLSEDGERGGGDNETPKKEHLAITPDLNHTQPQRPNHLDIMPSH) are disordered. A compositionally biased stretch (basic and acidic residues) spans 201–217 (DGERGGGDNETPKKEHL). Coiled coils occupy residues 265–327 (RSEI…LASL), 379–484 (NQQL…LNAN), and 554–583 (LNED…GNLA). Residues 396–423 (SQHLQNLQQQQQQQQQQQQQQTQAAPTA) show a composition bias toward low complexity. The segment at 396-460 (SQHLQNLQQQ…QQQQQQQQDA (65 aa)) is disordered. Residues 436–447 (YPSMSALQSISN) are compositionally biased toward polar residues. Residues 448 to 458 (QLQQQQQQQQQ) show a composition bias toward low complexity. The tract at residues 588–698 (GGSTSTRDTS…RTTWARHTTK (111 aa)) is disordered. Low complexity predominate over residues 590 to 640 (STSTRDTSRSSSTLDSPSSPRLRSSNNNISPGSSNGNQNHNNNSNSNSSSS). Composition is skewed to polar residues over residues 662–672 (LSATPSFITRS) and 679–698 (NRSQ…HTTK).

Expressed at higher level in wing imaginal disk.

Its function is as follows. Putative adapter protein. This chain is Capon-like protein, found in Drosophila melanogaster (Fruit fly).